A 127-amino-acid chain; its full sequence is MSKPKRERSLPDNEAKAVARMLRVSPQKLNLVAQLIRGRKASAALADLAFSRKRIAVDVKKCLESAIANAENNHDLDVDALVVSEAHVGKGIVMKRFTPRGRGRSGRIFKPFAQLTIVVRQVEEASA.

In terms of assembly, part of the 50S ribosomal subunit.

Its function is as follows. This protein binds specifically to 23S rRNA; its binding is stimulated by other ribosomal proteins, e.g. L4, L17, and L20. It is important during the early stages of 50S assembly. It makes multiple contacts with different domains of the 23S rRNA in the assembled 50S subunit and ribosome. In terms of biological role, the globular domain of the protein is located near the polypeptide exit tunnel on the outside of the subunit, while an extended beta-hairpin is found that lines the wall of the exit tunnel in the center of the 70S ribosome. This Rhodopseudomonas palustris (strain ATCC BAA-98 / CGA009) protein is Large ribosomal subunit protein uL22.